The chain runs to 519 residues: AAA-ATPase At4g30250 (519 aa).

A signal peptide spans 1–24 (MSDYWTTMASLLGMLAFCQTIVQL). 252–259 (GPPGTGKS) is an ATP binding site. Disordered regions lie at residues 315–335 (GKNK…NGSG) and 467–519 (KSVG…EKEK). Residues 479-488 (QEEEEEAEEE) are compositionally biased toward acidic residues. Residues 489–508 (QEKRALDSPNRRNREVCGFR) show a composition bias toward basic and acidic residues. Over residues 509-519 (EEEEEEDEKEK) the composition is skewed to acidic residues.

This sequence belongs to the AAA ATPase family. BCS1 subfamily. Mg(2+) serves as cofactor.

The catalysed reaction is ATP + H2O = ADP + phosphate + H(+). The chain is AAA-ATPase At4g30250 from Arabidopsis thaliana (Mouse-ear cress).